A 681-amino-acid chain; its full sequence is Amine oxidase [copper-containing] alpha 3, peroxisomal (681 aa).

323-334 (YLDCGDFGCGQC) contributes to the substrate binding site. The Proton acceptor role is filled by Asp325. Cys344 and Cys370 are joined by a disulfide. Residue 410 to 415 (VGNYDY) participates in substrate binding. The active-site Schiff-base intermediate with substrate; via topaquinone is Tyr413. Tyr413 is subject to 2',4',5'-topaquinone. His470 and His472 together coordinate Cu cation. Positions 481, 621, and 622 each coordinate Mn(2+). His632 provides a ligand contact to Cu cation.

The protein belongs to the copper/topaquinone oxidase family. Topaquinone (TPQ) is generated by copper-dependent autoxidation of a specific tyrosyl residue. In terms of tissue distribution, mostly expressed in stems, and, at lower levels, in flowers and leaves. Mainly detectable in stipules, hypocotyls and roots.

The protein localises to the peroxisome. It catalyses the reaction a primary methyl amine + O2 + H2O = an aldehyde + H2O2 + NH4(+). It participates in amine and polyamine degradation; putrescine degradation. Functionally, copper amine oxidase that can use putrescine and spermidine as substrates. Involved in putrescine catabolism in peroxisomes. The sequence is that of Amine oxidase [copper-containing] alpha 3, peroxisomal from Arabidopsis thaliana (Mouse-ear cress).